Consider the following 150-residue polypeptide: Small ribosomal subunit protein uS11y (150 aa).

Positions 129–150 (EDVTPVPTDSTRRKGGRRGRRL) are disordered. Basic residues predominate over residues 141–150 (RKGGRRGRRL).

The protein belongs to the universal ribosomal protein uS11 family.

The chain is Small ribosomal subunit protein uS11y from Zea mays (Maize).